Here is a 358-residue protein sequence, read N- to C-terminus: Alanine racemase (358 aa).

Catalysis depends on K34, which acts as the Proton acceptor; specific for D-alanine. An N6-(pyridoxal phosphate)lysine modification is found at K34. R129 lines the substrate pocket. Catalysis depends on Y254, which acts as the Proton acceptor; specific for L-alanine. M302 is a binding site for substrate.

Belongs to the alanine racemase family. Pyridoxal 5'-phosphate is required as a cofactor.

It catalyses the reaction L-alanine = D-alanine. It participates in amino-acid biosynthesis; D-alanine biosynthesis; D-alanine from L-alanine: step 1/1. Catalyzes the interconversion of L-alanine and D-alanine. May also act on other amino acids. This Hamiltonella defensa subsp. Acyrthosiphon pisum (strain 5AT) protein is Alanine racemase (alr).